Reading from the N-terminus, the 161-residue chain is UPF0178 protein BSUIS_A1819 (161 aa).

Belongs to the UPF0178 family.

The sequence is that of UPF0178 protein BSUIS_A1819 from Brucella suis (strain ATCC 23445 / NCTC 10510).